Consider the following 455-residue polypeptide: Single-stranded DNA-binding protein homolog sam-10 (455 aa).

The LisH domain occupies 19-51 (ARDRLTSYIYEYLQQTGASKTAETFKEEVLSTN). Disordered regions lie at residues 217–249 (PPPGGGAQPFPGASGSGGMMPNGAHPHMSLNSP), 281–302 (SDHQPMSAGPAAAAPGATTAGG), 314–343 (GPGSVPQVATTSVGSVGTPSSIGQQLHQPK), and 357–442 (EALT…NGEI). 2 stretches are compositionally biased toward low complexity: residues 288-298 (AGPAAAAPGAT) and 321-336 (VATTSVGSVGTPSSIG). The span at 396–406 (HSVNNNVNPGT) shows a compositional bias: polar residues. Residues 407 to 421 (PGSNPLSNPMSNPPL) are compositionally biased toward low complexity.

Ubiquitously expressed with higher expression in the head and tail ganglia, the vulva and PLM neurons.

The protein resides in the cytoplasm. Its subcellular location is the nucleus. Involved cell autonomously in PLM neuron pre-synaptic differentiation by negatively regulating prk-2 expression and in neurite branch positioning. The protein is Single-stranded DNA-binding protein homolog sam-10 of Caenorhabditis elegans.